Reading from the N-terminus, the 316-residue chain is 33 kDa chaperonin (316 aa).

2 disulfides stabilise this stretch: Cys-239/Cys-241 and Cys-272/Cys-275.

The protein belongs to the HSP33 family. Under oxidizing conditions two disulfide bonds are formed involving the reactive cysteines. Under reducing conditions zinc is bound to the reactive cysteines and the protein is inactive.

It is found in the cytoplasm. In terms of biological role, redox regulated molecular chaperone. Protects both thermally unfolding and oxidatively damaged proteins from irreversible aggregation. Plays an important role in the bacterial defense system toward oxidative stress. This is 33 kDa chaperonin from Clostridium perfringens (strain SM101 / Type A).